The chain runs to 330 residues: tRNA U34 carboxymethyltransferase (330 aa).

Residues Lys91, Trp105, Lys110, Gly130, 152-154, 181-182, Met196, Tyr200, and Arg315 each bind carboxy-S-adenosyl-L-methionine; these read DPS and IE.

This sequence belongs to the class I-like SAM-binding methyltransferase superfamily. CmoB family. As to quaternary structure, homotetramer.

It catalyses the reaction carboxy-S-adenosyl-L-methionine + 5-hydroxyuridine(34) in tRNA = 5-carboxymethoxyuridine(34) in tRNA + S-adenosyl-L-homocysteine + H(+). In terms of biological role, catalyzes carboxymethyl transfer from carboxy-S-adenosyl-L-methionine (Cx-SAM) to 5-hydroxyuridine (ho5U) to form 5-carboxymethoxyuridine (cmo5U) at position 34 in tRNAs. The protein is tRNA U34 carboxymethyltransferase of Shewanella loihica (strain ATCC BAA-1088 / PV-4).